The primary structure comprises 576 residues: Calmodulin-binding protein 60 B (576 aa).

The segment at M1–P25 is disordered. Positions M1 to R80 are calmodulin-binding. Residues P8–P25 are compositionally biased toward basic and acidic residues. Positions D150 to N273 are DNA-binding.

The protein belongs to the plant ACBP60 protein family. (Microbial infection) Interacts with V.dahliae SCP41. In terms of assembly, interacts with calmodulin (CaM).

The protein resides in the nucleus. Transcription activator that binds DNA in a sequence-specific manner, likely 5'-GAAATTTTGG-3', to promote the expression of target genes. Required for pathogen resistance. The sequence is that of Calmodulin-binding protein 60 B from Gossypium hirsutum (Upland cotton).